A 1453-amino-acid chain; its full sequence is NK-tumor recognition protein (1453 aa).

The 166-residue stretch at 10 to 175 folds into the PPIase cyclophilin-type domain; sequence HFDIEINREP…ADVRVIDCGV (166 aa). A disordered region spans residues 187 to 625; it reads KKRKKPTCSE…RWKPGQKPWK (439 aa). Low complexity predominate over residues 195 to 213; sequence SEGSDSSSRSSSSSESSSE. Positions 221–240 are enriched in basic residues; it reads IRRRRHKRRPKVRHAKKRRK. Residues 259–286 are compositionally biased toward basic and acidic residues; that stretch reads YSERSDVNEKRSVDSNTKREKPVVRPEE. A Glycyl lysine isopeptide (Lys-Gly) (interchain with G-Cter in SUMO2) cross-link involves residue K323. Over residues 329-348 the composition is skewed to basic residues; the sequence is SGRKIKGRGTIRYHTPPRSR. Residues S379, S401, and S416 each carry the phosphoserine modification. Residues 382–402 show a composition bias toward basic and acidic residues; the sequence is KWSKGDKLSDPCSSRWDERSL. Residues 403-421 are compositionally biased toward polar residues; the sequence is SQRSRSWSYNGYYSDLSTA. Positions 425 to 460 are enriched in basic residues; that stretch reads DGHHKKHRKEKKFKHKKKAKKQKHCRRHRQTKKRRI. Residues 514–531 show a composition bias toward basic and acidic residues; sequence SSRDSYRSKSHSRSDSRG. Composition is skewed to low complexity over residues 532–546 and 554–565; these read SSRSRAVSKSSSRSL and SSRSGPRRTSIS. Glycyl lysine isopeptide (Lys-Gly) (interchain with G-Cter in SUMO2) cross-links involve residues K576 and K579. Residue S611 is modified to Phosphoserine. Residue K637 forms a Glycyl lysine isopeptide (Lys-Gly) (interchain with G-Cter in SUMO2) linkage. S646 is modified (phosphoserine). Residues 651–661 are compositionally biased toward polar residues; that stretch reads TNIKATVSSSS. The interval 651-1453 is disordered; sequence TNIKATVSSS…RSPSESSRYS (803 aa). Residues K654 and K664 each participate in a glycyl lysine isopeptide (Lys-Gly) (interchain with G-Cter in SUMO2) cross-link. Composition is skewed to low complexity over residues 682–726 and 736–749; these read RSSG…SSRS and SQHSRSSSYTSVSS. A compositionally biased stretch (basic residues) spans 755 to 772; sequence AMFRSNRKKSVTSHKRHR. The span at 773–789 shows a compositional bias: basic and acidic residues; that stretch reads SNSEKTLHSKYVRGREK. Low complexity predominate over residues 799–809; it reads SRSSLDYSSDS. Basic and acidic residues-rich tracts occupy residues 820 to 852 and 859 to 868; these read PEKEKQGKVEALNDKQGKGREEGKPKPEWECPR and KDHSRDDSVS. S880, S882, S884, and S900 each carry phosphoserine. Positions 887–902 are enriched in basic and acidic residues; sequence DVTKSRKSDPRRGSEK. Acidic residues predominate over residues 903-913; it reads EEGEASSDSES. Residues 948 to 958 show a composition bias toward low complexity; sequence SSASESESSCS. The span at 966–982 shows a compositional bias: basic and acidic residues; sequence EPQKQKHSKDDLKGDHT. A compositionally biased stretch (basic residues) spans 983-1005; that stretch reads KRAREKSKAKKDKKHKAPKRKQA. The span at 1030-1045 shows a compositional bias: basic and acidic residues; sequence DPKEKRHVSEKCEAVK. S1139 and S1148 each carry phosphoserine. The span at 1170–1180 shows a compositional bias: polar residues; that stretch reads QESSMSESKTL. The span at 1189-1199 shows a compositional bias: low complexity; sequence SSTSVTSPVET. S1195 is modified (phosphoserine). Glycyl lysine isopeptide (Lys-Gly) (interchain with G-Cter in SUMO2) cross-links involve residues K1208 and K1249. The segment at 1303 to 1453 is arg/Ser tandem repeat-rich; the sequence is RSPHRSRSKS…RSPSESSRYS (151 aa). Residues 1322 to 1346 are compositionally biased toward low complexity; it reads SVSYSHSRSRSRSSTSSYRSRSYSR. The span at 1369–1379 shows a compositional bias: basic residues; the sequence is HSHRTSSRSRS. Residues 1380–1401 show a composition bias toward low complexity; the sequence is RSSSYDLHSRSRSYTYDSYYSR. Basic residues predominate over residues 1416–1426; the sequence is RGRSYNRRSRS.

The protein localises to the cell membrane. The catalysed reaction is [protein]-peptidylproline (omega=180) = [protein]-peptidylproline (omega=0). Inhibited by cyclosporin A (CsA). Its function is as follows. PPIase that catalyzes the cis-trans isomerization of proline imidic peptide bonds in oligopeptides and may therefore assist protein folding. Component of a putative tumor-recognition complex involved in the function of NK cells. The chain is NK-tumor recognition protein from Mus musculus (Mouse).